The chain runs to 450 residues: UDP-N-acetylmuramoylalanine--D-glutamate ligase (450 aa).

An ATP-binding site is contributed by 119–125 (GSNGKTT).

The protein belongs to the MurCDEF family.

The protein localises to the cytoplasm. It catalyses the reaction UDP-N-acetyl-alpha-D-muramoyl-L-alanine + D-glutamate + ATP = UDP-N-acetyl-alpha-D-muramoyl-L-alanyl-D-glutamate + ADP + phosphate + H(+). Its pathway is cell wall biogenesis; peptidoglycan biosynthesis. Cell wall formation. Catalyzes the addition of glutamate to the nucleotide precursor UDP-N-acetylmuramoyl-L-alanine (UMA). The sequence is that of UDP-N-acetylmuramoylalanine--D-glutamate ligase from Bacillus thuringiensis (strain Al Hakam).